A 484-amino-acid polypeptide reads, in one-letter code: Arginine ADP-riboxanase OspC2 (484 aa).

The NAD(+) site is built by histidine 143, glutamine 144, serine 145, leucine 149, isoleucine 162, asparagine 172, phenylalanine 188, histidine 206, phenylalanine 211, aspartate 231, and glutamate 326. Residue glutamate 326 is part of the active site. ANK repeat units follow at residues 414-444 (LYDV…DVNK) and 451-480 (SGDT…VSGK).

The protein belongs to the OspC family.

The protein localises to the secreted. The catalysed reaction is L-arginyl-[protein] + NAD(+) = ADP-riboxanated L-argininyl-[protein] + nicotinamide + NH4(+) + H(+). In terms of biological role, ADP-riboxanase effector that mediates arginine ADP-riboxanation of host caspases. ADP-riboxanation of host apoptotic caspases (CASP3 and CASP9) prevents their activation, thereby inhibiting host cell extrinsic and intrinsic apoptosis. Does not catalyze ADP-riboxanation of host CASP4/CASP11 or CASP8. In contrast to Ospc1 and OspC3, not able to inactivate host calmodulin. The polypeptide is Arginine ADP-riboxanase OspC2 (Shigella flexneri).